We begin with the raw amino-acid sequence, 479 residues long: Ribulose bisphosphate carboxylase large chain (479 aa).

The propeptide occupies M1–S2. Substrate is bound by residues N123 and T173. The active-site Proton acceptor is the K175. K177 provides a ligand contact to substrate. Mg(2+) is bound by residues K201, D203, and E204. K201 is modified (N6-carboxylysine). Phosphoserine is present on S208. Residue H294 is the Proton acceptor of the active site. Positions 295 and 327 each coordinate substrate. T330 is subject to Phosphothreonine. S379 lines the substrate pocket.

Belongs to the RuBisCO large chain family. Type I subfamily. As to quaternary structure, heterohexadecamer of 8 large chains and 8 small chains; disulfide-linked. The disulfide link is formed within the large subunit homodimers. Mg(2+) serves as cofactor. In terms of processing, the disulfide bond which can form in the large chain dimeric partners within the hexadecamer appears to be associated with oxidative stress and protein turnover.

Its subcellular location is the plastid. The protein localises to the chloroplast. It carries out the reaction 2 (2R)-3-phosphoglycerate + 2 H(+) = D-ribulose 1,5-bisphosphate + CO2 + H2O. The catalysed reaction is D-ribulose 1,5-bisphosphate + O2 = 2-phosphoglycolate + (2R)-3-phosphoglycerate + 2 H(+). Functionally, ruBisCO catalyzes two reactions: the carboxylation of D-ribulose 1,5-bisphosphate, the primary event in carbon dioxide fixation, as well as the oxidative fragmentation of the pentose substrate in the photorespiration process. Both reactions occur simultaneously and in competition at the same active site. This chain is Ribulose bisphosphate carboxylase large chain, found in Brassica oleracea (Wild cabbage).